The primary structure comprises 274 residues: Putative bidirectional sugar transporter SWEET7d (274 aa).

Residues 1 to 8 (MVPDLIRN) are Extracellular-facing. A helical membrane pass occupies residues 9–29 (VVGIVGNVISFGLFLSPVPTF). Residues 9–96 (VVGIVGNVIS…TIFFLFSDKK (88 aa)) form the MtN3/slv 1 domain. Residues 30–45 (WRIIKNKDVRDFKADQ) are Cytoplasmic-facing. The helical transmembrane segment at 46–66 (YLATLLNCMLWVFYGLPIVHP) threads the bilayer. Residues 67 to 68 (NS) are Extracellular-facing. The chain crosses the membrane as a helical span at residues 69–89 (ILVVTINGIGLVIEAVYLTIF). Residues 90 to 100 (FLFSDKKNKKK) lie on the Cytoplasmic side of the membrane. The helical transmembrane segment at 101–121 (MGVVLATEALFMAAVALGVLL) threads the bilayer. Over 122 to 130 (DAHTHQRRS) the chain is Extracellular. Residues 131 to 151 (LIVGILCVIFGTIMYSSPLTI) traverse the membrane as a helical segment. Residues 132–214 (IVGILCVIFG…QLILYAIYYR (83 aa)) form the MtN3/slv 2 domain. The Cytoplasmic segment spans residues 152–164 (MSQVVKTKSVEYM). Residues 165 to 185 (PLLLSVVSFLNGLCWTSYALI) form a helical membrane-spanning segment. Residues 186 to 188 (RFD) lie on the Extracellular side of the membrane. The chain crosses the membrane as a helical span at residues 189–209 (IFITIPNGLGVLFALMQLILY). At 210–274 (AIYYRTTPKK…SISRLSHKLA (65 aa)) the chain is on the cytoplasmic side. The disordered stretch occupies residues 218 to 274 (KKPSTTGPHPRSRIRTSSYQPSPPSPRAPASSPLSARTTTSMAAMSPSISRLSHKLA). Positions 245–258 (APASSPLSARTTTS) are enriched in low complexity.

This sequence belongs to the SWEET sugar transporter family. In terms of assembly, forms homooligomers and/or heterooligomers.

It is found in the cell membrane. Its function is as follows. Mediates both low-affinity uptake and efflux of sugar across the plasma membrane. This Oryza sativa subsp. japonica (Rice) protein is Putative bidirectional sugar transporter SWEET7d (SWEET7D).